Consider the following 157-residue polypeptide: Cell cycle control protein 50C (157 aa).

At Met1–Arg34 the chain is on the cytoplasmic side. Residues Val35 to Leu55 traverse the membrane as a helical segment. Residues Ser56–Val157 are Extracellular-facing. Asn66 is a glycosylation site (N-linked (GlcNAc...) asparagine).

This sequence belongs to the CDC50/LEM3 family.

It localises to the membrane. The chain is Cell cycle control protein 50C (TMEM30C) from Pan troglodytes (Chimpanzee).